Reading from the N-terminus, the 541-residue chain is Propionyl-CoA carboxylase beta chain, mitochondrial (541 aa).

A mitochondrion-targeting transit peptide spans 1–28; that stretch reads MAAAIRIRAVAAGARLSVLNCGLGITTR. A CoA carboxyltransferase N-terminal domain is found at 34 to 292; that stretch reads PVSVKERIDN…SSQDPAPIRE (259 aa). Positions 34–535 are carboxyltransferase; it reads PVSVKERIDN…SKKVHRPWRK (502 aa). Position 73 is a phosphoserine (serine 73). Residue lysine 101 is modified to N6-acetyllysine; alternate. Lysine 101 carries the post-translational modification N6-succinyllysine; alternate. Lysine 250 is subject to N6-succinyllysine. The region spanning 296-535 is the CoA carboxyltransferase C-terminal domain; that stretch reads PSDRLVPELD…SKKVHRPWRK (240 aa). An acyl-CoA binding region spans residues 327 to 360; that stretch reads DEREFFEIMPSYAKNIVVGFARMNGRTVGIVGNQ. Lysine 476 and lysine 491 each carry N6-acetyllysine; alternate. Residues lysine 476 and lysine 491 each carry the N6-succinyllysine; alternate modification.

It belongs to the AccD/PCCB family. As to quaternary structure, the holoenzyme is a dodecamer composed of 6 PCCA/alpha subunits and 6 PCCB/beta subunits. In terms of tissue distribution, broadly expressed. Most abundantly expressed in the kidney, liver, small intestine and stomach.

Its subcellular location is the mitochondrion matrix. It carries out the reaction propanoyl-CoA + hydrogencarbonate + ATP = (S)-methylmalonyl-CoA + ADP + phosphate + H(+). The catalysed reaction is butanoyl-CoA + hydrogencarbonate + ATP = (2S)-ethylmalonyl-CoA + ADP + phosphate + H(+). It participates in metabolic intermediate metabolism; propanoyl-CoA degradation; succinyl-CoA from propanoyl-CoA: step 1/3. Functionally, this is one of the 2 subunits of the biotin-dependent propionyl-CoA carboxylase (PCC), a mitochondrial enzyme involved in the catabolism of odd chain fatty acids, branched-chain amino acids isoleucine, threonine, methionine, and valine and other metabolites. Propionyl-CoA carboxylase catalyzes the carboxylation of propionyl-CoA/propanoyl-CoA to D-methylmalonyl-CoA/(S)-methylmalonyl-CoA. Within the holoenzyme, the alpha subunit catalyzes the ATP-dependent carboxylation of the biotin carried by the biotin carboxyl carrier (BCC) domain, while the beta subunit then transfers the carboxyl group from carboxylated biotin to propionyl-CoA. Propionyl-CoA carboxylase also significantly acts on butyryl-CoA/butanoyl-CoA, which is converted to ethylmalonyl-CoA/(2S)-ethylmalonyl-CoA. Other alternative minor substrates include (2E)-butenoyl-CoA/crotonoyl-CoA. The polypeptide is Propionyl-CoA carboxylase beta chain, mitochondrial (Mus musculus (Mouse)).